The following is a 132-amino-acid chain: Small ribosomal subunit protein uS8 (132 aa).

This sequence belongs to the universal ribosomal protein uS8 family. Part of the 30S ribosomal subunit. Contacts proteins S5 and S12.

One of the primary rRNA binding proteins, it binds directly to 16S rRNA central domain where it helps coordinate assembly of the platform of the 30S subunit. This is Small ribosomal subunit protein uS8 from Stenotrophomonas maltophilia (strain K279a).